The primary structure comprises 449 residues: MLPAATASLLGPLLTACALLPFAQGQTPNYTRPVFLCGGDVKGESGYVASEGFPNLYPPNKECIWTITVPEGQTVSLSFRVFDLELHPACRYDALEVFAGSGTSGQRLGRFCGTFRPAPLVAPGNQVTLRMTTDEGTGGRGFLLWYSGRATSGTEHQFCGGRLEKAQGTLTTPNWPESDYPPGISCSWHIIAPPDQVIALTFEKFDLEPDTYCRYDSVSVFNGAVSDDSRRLGKFCGDAVPGSISSEGNELLVQFVSDLSVTADGFSASYKTLPRGTAKEGQGPGPKRGTEPKVKLPPKSQPPEKTEESPSAPDAPTCPKQCRRTGTLQSNFCASSLVVTATVKSMVREPGEGLAVTVSLIGAYKTGGLDLPSPPTGASLKFYVPCKQCPPMKKGVSYLLMGQVEENRGPVLPPESFVVLHRPNQDQILTNLSKRKCPSQPVRAAASQD.

Positions 1 to 25 (MLPAATASLLGPLLTACALLPFAQG) are cleaved as a signal peptide. Asn-29 carries N-linked (GlcNAc...) asparagine glycosylation. Cystine bridges form between Cys-37–Cys-63, Cys-90–Cys-112, Cys-159–Cys-186, Cys-213–Cys-236, Cys-318–Cys-386, Cys-322–Cys-389, and Cys-333–Cys-437. CUB domains lie at 37–149 (CGGD…YSGR) and 159–273 (CGGR…YKTL). Phosphoserine is present on Ser-50. The disordered stretch occupies residues 271–321 (KTLPRGTAKEGQGPGPKRGTEPKVKLPPKSQPPEKTEESPSAPDAPTCPKQ). Residues 318–437 (CPKQCRRTGT…ILTNLSKRKC (120 aa)) enclose the NTR domain. The N-linked (GlcNAc...) asparagine glycan is linked to Asn-431.

In terms of assembly, interacts with EFEMP2. In terms of processing, C-terminally processed at multiple positions.

It is found in the secreted. In terms of biological role, binds to the C-terminal propeptide of type I procollagen and enhances procollagen C-proteinase activity. Functionally, C-terminal processed part of PCPE (CT-PCPE) may have an metalloproteinase inhibitory activity. The polypeptide is Procollagen C-endopeptidase enhancer 1 (PCOLCE) (Homo sapiens (Human)).